The chain runs to 365 residues: Serine/threonine-protein phosphatase 2A activator 1 (365 aa).

Residues 321 to 349 (YEAPSETSEKPAAGTAHTTTTTMPPPRMT) form a disordered region. Residues 331–342 (PAAGTAHTTTTT) show a composition bias toward low complexity.

The protein belongs to the PTPA-type PPIase family.

Its subcellular location is the cytoplasm. It localises to the nucleus. It carries out the reaction [protein]-peptidylproline (omega=180) = [protein]-peptidylproline (omega=0). PPIases accelerate the folding of proteins. It catalyzes the cis-trans isomerization of proline imidic peptide bonds in oligopeptides. Acts as a regulatory subunit for PP2A-like phosphatases modulating their activity or substrate specificity, probably by inducing a conformational change in the catalytic subunit, a direct target of the PPIase. Can reactivate inactive phosphatase PP2A-phosphatase methylesterase complexes (PP2Ai) in presence of ATP and Mg(2+) by dissociating the inactive form from the complex. This Eremothecium gossypii (strain ATCC 10895 / CBS 109.51 / FGSC 9923 / NRRL Y-1056) (Yeast) protein is Serine/threonine-protein phosphatase 2A activator 1 (RRD1).